A 235-amino-acid chain; its full sequence is Class B acid phosphatase (235 aa).

An N-terminal signal peptide occupies residues 1 to 22 (MKNLLKLSAIAILAASAVSTFA). Asp67 (nucleophile) is an active-site residue. Asp67 and Asp69 together coordinate Mg(2+). Residue Asp69 is the Proton donor of the active site. Substrate-binding positions include 135 to 136 (TG) and Lys175. Asp190 contributes to the Mg(2+) binding site.

Belongs to the class B bacterial acid phosphatase family. As to quaternary structure, homotetramer. Mg(2+) is required as a cofactor.

It is found in the periplasm. It carries out the reaction a phosphate monoester + H2O = an alcohol + phosphate. Its function is as follows. Dephosphorylates several organic phosphate monoesters. Also has a phosphotransferase activity catalyzing the transfer of low-energy phosphate groups from organic phosphate monoesters to free hydroxyl groups of various organic compounds. The protein is Class B acid phosphatase of Haemophilus parainfluenzae (strain T3T1).